Here is a 306-residue protein sequence, read N- to C-terminus: UDP-N-acetylenolpyruvoylglucosamine reductase (306 aa).

The 187-residue stretch at 30-216 (RIGGPVPYIL…KSKLIDFSTR (187 aa)) folds into the FAD-binding PCMH-type domain. R180 is an active-site residue. S230 serves as the catalytic Proton donor. E301 is a catalytic residue.

It belongs to the MurB family. Requires FAD as cofactor.

Its subcellular location is the cytoplasm. It carries out the reaction UDP-N-acetyl-alpha-D-muramate + NADP(+) = UDP-N-acetyl-3-O-(1-carboxyvinyl)-alpha-D-glucosamine + NADPH + H(+). It functions in the pathway cell wall biogenesis; peptidoglycan biosynthesis. Cell wall formation. This chain is UDP-N-acetylenolpyruvoylglucosamine reductase, found in Petrotoga mobilis (strain DSM 10674 / SJ95).